The sequence spans 499 residues: Probable alpha-L-arabinofuranosidase B (499 aa).

The N-terminal stretch at 1–17 is a signal peptide; the sequence is MFSRRNLLALGLAATVS. A catalytic region spans residues 18-335; the sequence is AGPCDIYEAG…ENIVAAKYVV (318 aa). 3 cysteine pairs are disulfide-bonded: C21–C31, C81–C86, and C176–C177. N-linked (GlcNAc...) asparagine glycosylation is present at N83. The N-linked (GlcNAc...) asparagine glycan is linked to N202. D219 provides a ligand contact to substrate. E221 acts as the Nucleophile in catalysis. Substrate contacts are provided by N222, N223, G296, H416, N418, F419, D435, H463, E465, L468, and D488. Residues 336–499 are ABD; the sequence is GSLVSGPSFT…SFEIETAFAS (164 aa). C401 and C439 form a disulfide bridge.

The protein belongs to the glycosyl hydrolase 54 family.

It localises to the secreted. It catalyses the reaction Hydrolysis of terminal non-reducing alpha-L-arabinofuranoside residues in alpha-L-arabinosides.. Its pathway is glycan metabolism; L-arabinan degradation. Alpha-L-arabinofuranosidase involved in the degradation of arabinoxylan, a major component of plant hemicellulose. Able to hydrolyze 1,5-, 1,3- and 1,2-alpha-linkages not only in L-arabinofuranosyl oligosaccharides, but also in polysaccharides containing terminal non-reducing L-arabinofuranoses in side chains, like L-arabinan, arabinogalactan and arabinoxylan. In Aspergillus awamori (Black koji mold), this protein is Probable alpha-L-arabinofuranosidase B (abfB).